The chain runs to 274 residues: Dermonecrotic toxin SdSicTox-betaIIB1bviii (274 aa).

His-5 is an active-site residue. 2 residues coordinate Mg(2+): Glu-25 and Asp-27. The active-site Nucleophile is His-41. 2 disulfide bridges follow: Cys-45–Cys-51 and Cys-47–Cys-190. A Mg(2+)-binding site is contributed by Asp-85.

The protein belongs to the arthropod phospholipase D family. Class II subfamily. Requires Mg(2+) as cofactor. In terms of tissue distribution, expressed by the venom gland.

The protein resides in the secreted. It carries out the reaction an N-(acyl)-sphingosylphosphocholine = an N-(acyl)-sphingosyl-1,3-cyclic phosphate + choline. The enzyme catalyses an N-(acyl)-sphingosylphosphoethanolamine = an N-(acyl)-sphingosyl-1,3-cyclic phosphate + ethanolamine. The catalysed reaction is a 1-acyl-sn-glycero-3-phosphocholine = a 1-acyl-sn-glycero-2,3-cyclic phosphate + choline. It catalyses the reaction a 1-acyl-sn-glycero-3-phosphoethanolamine = a 1-acyl-sn-glycero-2,3-cyclic phosphate + ethanolamine. Functionally, dermonecrotic toxins cleave the phosphodiester linkage between the phosphate and headgroup of certain phospholipids (sphingolipid and lysolipid substrates), forming an alcohol (often choline) and a cyclic phosphate. This toxin acts on sphingomyelin (SM). It may also act on ceramide phosphoethanolamine (CPE), lysophosphatidylcholine (LPC) and lysophosphatidylethanolamine (LPE), but not on lysophosphatidylserine (LPS), and lysophosphatidylglycerol (LPG). It acts by transphosphatidylation, releasing exclusively cyclic phosphate products as second products. Induces dermonecrosis, hemolysis, increased vascular permeability, edema, inflammatory response, and platelet aggregation. The chain is Dermonecrotic toxin SdSicTox-betaIIB1bviii from Sicarius cf. damarensis (strain GJB-2008) (Six-eyed sand spider).